Reading from the N-terminus, the 92-residue chain is Acylphosphatase (92 aa).

A disulfide bridge connects residues cysteine 5 and cysteine 49. The 88-residue stretch at 5–92 (CIIAWVYGRV…SGELTDFRIR (88 aa)) folds into the Acylphosphatase-like domain. Active-site residues include arginine 20 and asparagine 38.

Belongs to the acylphosphatase family.

The catalysed reaction is an acyl phosphate + H2O = a carboxylate + phosphate + H(+). This is Acylphosphatase from Escherichia coli O157:H7.